The sequence spans 405 residues: MDTAGMEHSVSWISSNSDELILRSWISSRMDIAELHRAGDDIKEMMKSEGYYSEPSKYEAELSDGNITFAYSYPIKAFEKFLGYYDRENRIAFNPSISMRTDFSFCLAACRYRKNGKTDTVVLDGYADNKYYKKAKFALDKFRSEYSINGSFDFYIKRYRRYQKAKGLSESSAVAAAVSRALISNVFGDDAAKDDIFVSRYARLVSGSGTRAAHDGISMWLSYPGMDSRDCVAFKVGKSNENLNYGVFPKYSDVATDNAHSIAVNSVFYGTWVSEKFSNVKRLISDHFDINDLLKIGENDMLRLNSILMSGGLIIQTPDSLRILKEILKFKSKNEGFYFTADTGPSIAIFSFDRSLIDEFRENVNDEYIEGSYDFKGYNNRMRDFIREAQEYFTQTPGEDEEDRL.

It belongs to the mevalonate 3,5-bisphosphate decarboxylase family. As to quaternary structure, homodimer.

The enzyme catalyses (R)-3,5-bisphosphomevalonate + H(+) = isopentenyl phosphate + phosphate + CO2. It functions in the pathway isoprenoid biosynthesis; isopentenyl diphosphate biosynthesis via mevalonate pathway. In terms of biological role, catalyzes the ATP-independent decarboxylation of (R)-mevalonate 3,5-bisphosphate to isopentenyl phosphate. Functions in an alternative mevalonate pathway, only present in extreme acidophiles of the Thermoplasmatales order, which passes through mevalonate 3-phosphate rather than mevalonate 5-phosphate. The sequence is that of Mevalonate 3,5-bisphosphate decarboxylase from Thermoplasma acidophilum (strain ATCC 25905 / DSM 1728 / JCM 9062 / NBRC 15155 / AMRC-C165).